A 647-amino-acid chain; its full sequence is Threonine--tRNA ligase (647 aa).

The region spanning Met-1–Thr-61 is the TGS domain. Positions Asp-242–Pro-540 are catalytic. Cys-336, His-387, and His-517 together coordinate Zn(2+).

It belongs to the class-II aminoacyl-tRNA synthetase family. In terms of assembly, homodimer. Zn(2+) serves as cofactor.

It localises to the cytoplasm. It carries out the reaction tRNA(Thr) + L-threonine + ATP = L-threonyl-tRNA(Thr) + AMP + diphosphate + H(+). In terms of biological role, catalyzes the attachment of threonine to tRNA(Thr) in a two-step reaction: L-threonine is first activated by ATP to form Thr-AMP and then transferred to the acceptor end of tRNA(Thr). Also edits incorrectly charged L-seryl-tRNA(Thr). The chain is Threonine--tRNA ligase from Streptococcus pneumoniae (strain 70585).